A 185-amino-acid polypeptide reads, in one-letter code: Ribosome-recycling factor (185 aa).

Positions 135–159 (ANDKLKASEKNKEASEDEVKRAQEK) are disordered.

Belongs to the RRF family.

The protein localises to the cytoplasm. Functionally, responsible for the release of ribosomes from messenger RNA at the termination of protein biosynthesis. May increase the efficiency of translation by recycling ribosomes from one round of translation to another. In Moorella thermoacetica (strain ATCC 39073 / JCM 9320), this protein is Ribosome-recycling factor.